The chain runs to 192 residues: CASP-like protein 4C1 (192 aa).

A compositionally biased stretch (polar residues) spans 1 to 11 (MRSPQSLRNGE). The disordered stretch occupies residues 1–23 (MRSPQSLRNGETPSPSPRPPRFP). The Cytoplasmic portion of the chain corresponds to 1-40 (MRSPQSLRNGETPSPSPRPPRFPTPHFHSTVSLQKLKRFN). A compositionally biased stretch (pro residues) spans 14–23 (SPSPRPPRFP). The helical transmembrane segment at 41–61 (LLILVFRLSTFCFSLASSVFM) threads the bilayer. Residues 62–75 (LTNPTWYHFDAFRY) lie on the Extracellular side of the membrane. Residues 76–96 (VFAANAIVAIYSLFEMAASVW) form a helical membrane-spanning segment. Residues 97 to 107 (EISRGNTLFPE) lie on the Cytoplasmic side of the membrane. Residues 108–128 (ILQVWFDFGHDQVFAYLLLSA) form a helical membrane-spanning segment. Over 129–156 (DSAATALAKTLKGGDTCAASNAFCVQSY) the chain is Extracellular. The chain crosses the membrane as a helical span at residues 157–177 (IAIALGFAGFLFLGLSSLLSG). The Cytoplasmic segment spans residues 178–192 (FRVVCFLINGSRFYV).

It belongs to the Casparian strip membrane proteins (CASP) family. Homodimer and heterodimers.

The protein localises to the cell membrane. The chain is CASP-like protein 4C1 from Ricinus communis (Castor bean).